The following is a 173-amino-acid chain: NADH-ubiquinone oxidoreductase chain 6 (173 aa).

Helical transmembrane passes span 1 to 21, 27 to 47, 48 to 68, 87 to 107, and 139 to 159; these read MTYF…AVAS, YGVV…LSLG, ISFV…VVFV, VIGY…IGGF, and CGVG…FVVL.

This sequence belongs to the complex I subunit 6 family.

It localises to the mitochondrion membrane. The catalysed reaction is a ubiquinone + NADH + 5 H(+)(in) = a ubiquinol + NAD(+) + 4 H(+)(out). In terms of biological role, core subunit of the mitochondrial membrane respiratory chain NADH dehydrogenase (Complex I) that is believed to belong to the minimal assembly required for catalysis. Complex I functions in the transfer of electrons from NADH to the respiratory chain. The immediate electron acceptor for the enzyme is believed to be ubiquinone. This chain is NADH-ubiquinone oxidoreductase chain 6 (MT-ND6), found in Alca torda (Razorbill).